Consider the following 236-residue polypeptide: MTKTTLLHEGKAKKVFLTDQSDLVIQEFKDDATAFNNKKKGTIADKGVVNNAISCRLFTLLEEHGIRTHLVEKLSDRDMLCKRLDIIKVEVVVRNIAAGSLVKRYGFKEGFVLQEPLVEFYLKDDDLDDPLMNDFHAVALGVATSEELAILRSRAEAINLVLRQFFADRKLKLVDFKLEFGRHKNEILLGDEISPDTCRFWDLDTNEKMDKDRFRFDMGGVENAYSEVQKRVLELD.

It belongs to the SAICAR synthetase family.

It catalyses the reaction 5-amino-1-(5-phospho-D-ribosyl)imidazole-4-carboxylate + L-aspartate + ATP = (2S)-2-[5-amino-1-(5-phospho-beta-D-ribosyl)imidazole-4-carboxamido]succinate + ADP + phosphate + 2 H(+). It participates in purine metabolism; IMP biosynthesis via de novo pathway; 5-amino-1-(5-phospho-D-ribosyl)imidazole-4-carboxamide from 5-amino-1-(5-phospho-D-ribosyl)imidazole-4-carboxylate: step 1/2. This Chlorobium phaeobacteroides (strain DSM 266 / SMG 266 / 2430) protein is Phosphoribosylaminoimidazole-succinocarboxamide synthase.